The primary structure comprises 118 residues: Small ribosomal subunit protein uS13 (118 aa).

The segment at 91–118 (HRRGLPVRGQRTKTNARTRKGPRKPIKK) is disordered.

This sequence belongs to the universal ribosomal protein uS13 family. Part of the 30S ribosomal subunit. Forms a loose heterodimer with protein S19. Forms two bridges to the 50S subunit in the 70S ribosome.

In terms of biological role, located at the top of the head of the 30S subunit, it contacts several helices of the 16S rRNA. In the 70S ribosome it contacts the 23S rRNA (bridge B1a) and protein L5 of the 50S subunit (bridge B1b), connecting the 2 subunits; these bridges are implicated in subunit movement. Contacts the tRNAs in the A and P-sites. The polypeptide is Small ribosomal subunit protein uS13 (Photorhabdus laumondii subsp. laumondii (strain DSM 15139 / CIP 105565 / TT01) (Photorhabdus luminescens subsp. laumondii)).